A 387-amino-acid chain; its full sequence is Deoxyhypusine synthase (387 aa).

NAD(+) is bound by residues 108–112, 134–136, E140, and D257; these read SNLIS and SAG. Residue 139–140 participates in spermidine binding; the sequence is EE. D262 contacts spermidine. Position 304 (G304) interacts with NAD(+). H309 contacts spermidine. 329-330 provides a ligand contact to NAD(+); the sequence is TG. Spermidine is bound by residues 335-337 and 344-350; these read GSD and EAVSWGK. Residue K350 is the Nucleophile of the active site. 363–364 serves as a coordination point for NAD(+); it reads DV.

The protein belongs to the deoxyhypusine synthase family. In terms of assembly, homotetramer. Requires NAD(+) as cofactor.

It carries out the reaction [eIF5A protein]-L-lysine + spermidine = [eIF5A protein]-deoxyhypusine + propane-1,3-diamine. It participates in protein modification; eIF5A hypusination. Functionally, catalyzes the NAD-dependent oxidative cleavage of spermidine and the subsequent transfer of the butylamine moiety of spermidine to the epsilon-amino group of a specific lysine residue of the eIF-5A precursor protein to form the intermediate deoxyhypusine residue. This Saccharomyces cerevisiae (strain ATCC 204508 / S288c) (Baker's yeast) protein is Deoxyhypusine synthase.